Reading from the N-terminus, the 610-residue chain is UvrABC system protein C (610 aa).

The region spanning 16–94 (NQPGVYRMYN…IKQYLPKYNV (79 aa)) is the GIY-YIG domain. A UVR domain is found at 204–239 (NQVLSILVEKMEQASRELRFEDAAKARDQIQAIRRV).

This sequence belongs to the UvrC family. Interacts with UvrB in an incision complex.

It localises to the cytoplasm. The UvrABC repair system catalyzes the recognition and processing of DNA lesions. UvrC both incises the 5' and 3' sides of the lesion. The N-terminal half is responsible for the 3' incision and the C-terminal half is responsible for the 5' incision. This Vibrio cholerae serotype O1 (strain ATCC 39315 / El Tor Inaba N16961) protein is UvrABC system protein C.